Consider the following 637-residue polypeptide: Nuclear receptor subfamily 2 group C member 1-B (637 aa).

Residues 149–224 constitute a DNA-binding region (nuclear receptor); it reads VELCVVCGDK…LGMKQDSVQC (76 aa). NR C4-type zinc fingers lie at residues 152 to 172 and 188 to 207; these read CVVC…CEGC and CRGS…CQYC. In terms of domain architecture, NR LBD spans 383-624; sequence CVGSGSNLLP…SIIPYILRME (242 aa).

This sequence belongs to the nuclear hormone receptor family. NR2 subfamily.

Its subcellular location is the nucleus. Functionally, orphan nuclear receptor. Binds the IR7 element in the promoter of its own gene in an autoregulatory negative feedback mechanism. Primarily repressor of a broad range of genes. Binds to hormone response elements (HREs) consisting of two 5'-AGGTCA-3' half site direct repeat consensus sequences. This chain is Nuclear receptor subfamily 2 group C member 1-B (nr2c1-b), found in Xenopus laevis (African clawed frog).